A 63-amino-acid polypeptide reads, in one-letter code: DNA-directed RNA polymerase 7 kDa subunit (63 aa).

This sequence belongs to the poxviridae DNA-directed RNA polymerase 7 kDa subunit family. The DNA-dependent RNA polymerase used for intermediate and late genes expression consists of eight subunits 147 kDa, 133 kDa, 35 kDa, 30 kDa, 22 kDa, 19 kDa, 18 kDa and 7 kDa totalling more than 500 kDa in mass. The same holoenzyme, with the addition of the transcription-specificity factor RAP94, is used for early gene expression.

Its subcellular location is the virion. It catalyses the reaction RNA(n) + a ribonucleoside 5'-triphosphate = RNA(n+1) + diphosphate. Its function is as follows. Part of the DNA-dependent RNA polymerase which catalyzes the transcription of viral DNA into RNA using the four ribonucleoside triphosphates as substrates. Responsible for the transcription of early, intermediate and late genes. DNA-dependent RNA polymerase associates with the early transcription factor (ETF) thereby allowing the early genes transcription. Late transcription, and probably also intermediate transcription, require newly synthesized RNA polymerase. This chain is DNA-directed RNA polymerase 7 kDa subunit (RPO7), found in Rabbit fibroma virus (strain Kasza) (RFV).